The chain runs to 418 residues: Protease LasA (418 aa).

The first 31 residues, 1-31 (MQHKRSRALASPRSPFLFALLALAVGGTANA), serve as a signal peptide directing secretion. A propeptide spanning residues 32-236 (HDDGLPAFRY…ARQLQAKAAL (205 aa)) is cleaved from the precursor. Residues His-259 and Asp-272 each contribute to the Zn(2+) site. Residues Cys-301 and Cys-347 are joined by a disulfide bond. Catalysis depends on proton donor/acceptor residues His-317 and His-356. Residue His-358 participates in Zn(2+) binding. A disulfide bond links Cys-391 and Cys-406.

It belongs to the peptidase M23A family. It depends on Zn(2+) as a cofactor.

The protein localises to the secreted. Its function is as follows. Involved in proteolysis and elastolysis (degradation of the host protein elastin). Has staphylolytic activity (degrades pentaglycine cross-links in cell wall peptidoglycan), preferring Gly-Gly-|-X substrates where X is Ala or Gly. Enhances the elastolytic but not proteolytic activity of elastase (lasB) and elastolytic activity of other proteases. Degradation of elastin is likely to contribute to the pathogenicity of P.aeruginosa. The sequence is that of Protease LasA (lasA) from Pseudomonas aeruginosa (strain UCBPP-PA14).